A 126-amino-acid chain; its full sequence is Glycine cleavage system H protein (126 aa).

The region spanning 23 to 104 (KVRVGITDFA…YDEGWMIEII (82 aa)) is the Lipoyl-binding domain. Lys-64 carries the post-translational modification N6-lipoyllysine.

This sequence belongs to the GcvH family. The glycine cleavage system is composed of four proteins: P, T, L and H. The cofactor is (R)-lipoate.

Its function is as follows. The glycine cleavage system catalyzes the degradation of glycine. The H protein shuttles the methylamine group of glycine from the P protein to the T protein. The protein is Glycine cleavage system H protein of Chlorobium phaeobacteroides (strain BS1).